We begin with the raw amino-acid sequence, 89 residues long: Small ribosomal subunit protein uS15 (89 aa).

The protein belongs to the universal ribosomal protein uS15 family. Part of the 30S ribosomal subunit. Forms a bridge to the 50S subunit in the 70S ribosome, contacting the 23S rRNA.

In terms of biological role, one of the primary rRNA binding proteins, it binds directly to 16S rRNA where it helps nucleate assembly of the platform of the 30S subunit by binding and bridging several RNA helices of the 16S rRNA. Forms an intersubunit bridge (bridge B4) with the 23S rRNA of the 50S subunit in the ribosome. The chain is Small ribosomal subunit protein uS15 from Exiguobacterium sp. (strain ATCC BAA-1283 / AT1b).